Here is an 842-residue protein sequence, read N- to C-terminus: Glucans biosynthesis glucosyltransferase H (842 aa).

Transmembrane regions (helical) follow at residues 140-160 (ILLL…KTIL), 194-214 (ILIL…TALM), 513-533 (VFLT…FLAL), 568-588 (IALF…SIIL), 600-620 (FIRV…LAPV), 622-642 (MLFH…VWNS), 656-676 (FMRH…MAWL), and 680-700 (FLFW…VSAI).

The protein belongs to the glycosyltransferase 2 family. OpgH subfamily.

It localises to the cell inner membrane. The protein operates within glycan metabolism; osmoregulated periplasmic glucan (OPG) biosynthesis. Involved in the biosynthesis of osmoregulated periplasmic glucans (OPGs). The protein is Glucans biosynthesis glucosyltransferase H of Klebsiella pneumoniae (strain 342).